Reading from the N-terminus, the 242-residue chain is uncharacterized protein (242 aa).

In terms of domain architecture, S4 RNA-binding spans 2–62 (EKAYKLLSVQ…VEKPSVIFED (61 aa)). Asp93 is a catalytic residue.

It belongs to the pseudouridine synthase RluA family.

It carries out the reaction a uridine in RNA = a pseudouridine in RNA. This is an uncharacterized protein from Helicobacter pylori (strain J99 / ATCC 700824) (Campylobacter pylori J99).